The sequence spans 381 residues: Creatine kinase M-type (381 aa).

Residues 11-98 enclose the Phosphagen kinase N-terminal domain; sequence KLNFKAEEEY…FDPIIQDRHG (88 aa). Residues 125 to 367 enclose the Phosphagen kinase C-terminal domain; that stretch reads YVLSSRVRTG…KLMVEMEKKL (243 aa). 128–132 lines the ATP pocket; that stretch reads SSRVR. The residue at position 164 (serine 164) is a Phosphoserine. At threonine 166 the chain carries Phosphothreonine. At serine 178 the chain carries Phosphoserine. Position 180 is a phosphothreonine (threonine 180). Histidine 191 provides a ligand contact to ATP. Serine 199 is modified (phosphoserine). ATP is bound by residues arginine 236 and arginine 292. Residues threonine 313 and threonine 322 each carry the phosphothreonine modification. ATP is bound by residues 320-325 and aspartate 335; that span reads RGTGGV. Serine 372 carries the post-translational modification Phosphoserine.

Belongs to the ATP:guanido phosphotransferase family. In terms of assembly, dimer of identical or non-identical chains, which can be either B (brain type) or M (muscle type). With MM being the major form in skeletal muscle and myocardium, MB existing in myocardium, and BB existing in many tissues, especially brain.

The enzyme catalyses creatine + ATP = N-phosphocreatine + ADP + H(+). In terms of biological role, reversibly catalyzes the transfer of phosphate between ATP and various phosphogens (e.g. creatine phosphate). Creatine kinase isoenzymes play a central role in energy transduction in tissues with large, fluctuating energy demands, such as skeletal muscle, heart, brain and spermatozoa. In Sus scrofa (Pig), this protein is Creatine kinase M-type (CKM).